A 129-amino-acid polypeptide reads, in one-letter code: Large ribosomal subunit protein bL19 (129 aa).

Belongs to the bacterial ribosomal protein bL19 family.

In terms of biological role, this protein is located at the 30S-50S ribosomal subunit interface and may play a role in the structure and function of the aminoacyl-tRNA binding site. In Paraburkholderia phytofirmans (strain DSM 17436 / LMG 22146 / PsJN) (Burkholderia phytofirmans), this protein is Large ribosomal subunit protein bL19.